A 396-amino-acid polypeptide reads, in one-letter code: E3 ubiquitin-protein transferase MAEA (396 aa).

The tract at residues 1 to 124 is extracellular and involved in cell to cell contact; it reads MAVQESAAQL…AAASMWKRKR (124 aa). T28 carries the post-translational modification Phosphothreonine. The region spanning 121 to 153 is the LisH domain; sequence KRKRMDRMMVEHLLRCGYYNTAVKLARQSGIED. One can recognise a CTLH domain in the interval 159–216; the sequence is MFLTAKEVEESLERRETATCLAWCHDNKSRLRKMKSCLEFSLRIQEFIELVRQNKRLD. The segment at 314–381 adopts an RING-Gid-type zinc-finger fold; sequence CPVCSRSLNK…QDDKVVCPRT (68 aa).

As to quaternary structure, identified in the CTLH complex that contains GID4, RANBP9 and/or RANBP10, MKLN1, MAEA, RMND5A (or alternatively its paralog RMND5B), GID8, ARMC8, WDR26 and YPEL5. Within this complex, MAEA, RMND5A (or alternatively its paralog RMND5B), GID8, WDR26, and RANBP9 and/or RANBP10 form the catalytic core, while GID4, MKLN1, ARMC8 and YPEL5 have ancillary roles. Interacts with F-actin. Autoubiquitinated as component of the CTLH E3 ubiquitin-protein ligase complex (in vitro). In terms of tissue distribution, detected in embryonic fibroblasts. Detected in macrophages. Detected in heart. liver, spleen and kidney (at protein level).

The protein localises to the cytoplasm. The protein resides in the nucleus. It localises to the nucleoplasm. Its subcellular location is the nucleus matrix. It is found in the cell membrane. The protein localises to the cytoskeleton. The catalysed reaction is S-ubiquitinyl-[E2 ubiquitin-conjugating enzyme]-L-cysteine + [acceptor protein]-L-lysine = [E2 ubiquitin-conjugating enzyme]-L-cysteine + N(6)-ubiquitinyl-[acceptor protein]-L-lysine.. Core component of the CTLH E3 ubiquitin-protein ligase complex that selectively accepts ubiquitin from UBE2H and mediates ubiquitination and subsequent proteasomal degradation of the transcription factor HBP1. MAEA and RMND5A are both required for catalytic activity of the CTLH E3 ubiquitin-protein ligase complex. MAEA is required for normal cell proliferation. The CTLH E3 ubiquitin-protein ligase complex is not required for the degradation of enzymes involved in gluconeogenesis, such as FBP1. Plays a role in erythroblast enucleation during erythrocyte maturation and in the development of mature macrophages. Mediates the attachment of erythroid cell to mature macrophages; this MAEA-mediated contact inhibits erythroid cell apoptosis. Participates in erythroblastic island formation, which is the functional unit of definitive erythropoiesis. Associates with F-actin to regulate actin distribution in erythroblasts and macrophages. May contribute to nuclear architecture and cells division events. The sequence is that of E3 ubiquitin-protein transferase MAEA (Maea) from Mus musculus (Mouse).